A 358-amino-acid chain; its full sequence is MATH domain and coiled-coil domain-containing protein At3g58440 (358 aa).

Positions 8–131 (QDKFTWVLEK…NDRLTIVAEV (124 aa)) constitute an MATH domain. Positions 250–309 (LRDAGFKVDWLEKKLDQLKEKKEEEMSGLARLHEIEERLQKLKLLFVDLESQLQKEKVEA) form a coiled coil.

The polypeptide is MATH domain and coiled-coil domain-containing protein At3g58440 (Arabidopsis thaliana (Mouse-ear cress)).